The chain runs to 672 residues: tRNA 5-methylaminomethyl-2-thiouridine biosynthesis bifunctional protein MnmC (672 aa).

Residues 1–243 (MTSITHAELG…KREMIAGCME (243 aa)) are tRNA (mnm(5)s(2)U34)-methyltransferase. The tract at residues 269–672 (IGGGIASAAL…LRKGKAITEL (404 aa)) is FAD-dependent cmnm(5)s(2)U34 oxidoreductase.

The protein in the N-terminal section; belongs to the methyltransferase superfamily. tRNA (mnm(5)s(2)U34)-methyltransferase family. In the C-terminal section; belongs to the DAO family. It depends on FAD as a cofactor.

The protein resides in the cytoplasm. It catalyses the reaction 5-aminomethyl-2-thiouridine(34) in tRNA + S-adenosyl-L-methionine = 5-methylaminomethyl-2-thiouridine(34) in tRNA + S-adenosyl-L-homocysteine + H(+). In terms of biological role, catalyzes the last two steps in the biosynthesis of 5-methylaminomethyl-2-thiouridine (mnm(5)s(2)U) at the wobble position (U34) in tRNA. Catalyzes the FAD-dependent demodification of cmnm(5)s(2)U34 to nm(5)s(2)U34, followed by the transfer of a methyl group from S-adenosyl-L-methionine to nm(5)s(2)U34, to form mnm(5)s(2)U34. This is tRNA 5-methylaminomethyl-2-thiouridine biosynthesis bifunctional protein MnmC from Vibrio vulnificus (strain YJ016).